The sequence spans 494 residues: 3-octaprenyl-4-hydroxybenzoate carboxy-lyase (494 aa).

Asn-172 is a binding site for Mn(2+). Prenylated FMN-binding positions include 175-177 (IYR), 189-191 (RWL), and 194-195 (RG). Residue Glu-238 participates in Mn(2+) binding. Asp-287 (proton donor) is an active-site residue.

This sequence belongs to the UbiD family. In terms of assembly, homohexamer. The cofactor is prenylated FMN. Requires Mn(2+) as cofactor.

Its subcellular location is the cell membrane. It carries out the reaction a 4-hydroxy-3-(all-trans-polyprenyl)benzoate + H(+) = a 2-(all-trans-polyprenyl)phenol + CO2. It participates in cofactor biosynthesis; ubiquinone biosynthesis. Its function is as follows. Catalyzes the decarboxylation of 3-octaprenyl-4-hydroxy benzoate to 2-octaprenylphenol, an intermediate step in ubiquinone biosynthesis. This is 3-octaprenyl-4-hydroxybenzoate carboxy-lyase from Escherichia coli O139:H28 (strain E24377A / ETEC).